Here is a 128-residue protein sequence, read N- to C-terminus: uncharacterized protein (128 aa).

The interval Leu-25–Asp-61 is disordered. Positions Glu-44–Asp-61 are enriched in polar residues.

This is an uncharacterized protein from Homo sapiens (Human).